A 460-amino-acid chain; its full sequence is GTPase Der (460 aa).

EngA-type G domains lie at 2–164 (QSII…HEEF) and 196–368 (IRVG…ENFT). Residues 8–15 (GKPNVGKS), 55–59 (DSGGL), 116–119 (NKVD), 202–209 (GRVNVGKS), 249–253 (DTAGI), and 313–316 (NKWD) each bind GTP. One can recognise a KH-like domain in the interval 369–453 (QKIQTSKLNT…PLVIASRKKG (85 aa)).

The protein belongs to the TRAFAC class TrmE-Era-EngA-EngB-Septin-like GTPase superfamily. EngA (Der) GTPase family. As to quaternary structure, associates with the 50S ribosomal subunit.

In terms of biological role, GTPase that plays an essential role in the late steps of ribosome biogenesis. The protein is GTPase Der of Campylobacter jejuni subsp. jejuni serotype O:23/36 (strain 81-176).